A 59-amino-acid polypeptide reads, in one-letter code: UPF0181 protein YoaH (59 aa).

It belongs to the UPF0181 family.

The protein is UPF0181 protein YoaH of Shigella flexneri.